Consider the following 182-residue polypeptide: Inosine/xanthosine triphosphatase (182 aa).

Mg(2+) contacts are provided by D38 and E68. 68 to 69 (EA) contributes to the substrate binding site.

The protein belongs to the YjjX NTPase family. As to quaternary structure, homodimer. Mg(2+) serves as cofactor. The cofactor is Mn(2+).

It catalyses the reaction XTP + H2O = XDP + phosphate + H(+). It carries out the reaction ITP + H2O = IDP + phosphate + H(+). Phosphatase that hydrolyzes non-canonical purine nucleotides such as XTP and ITP to their respective diphosphate derivatives. Probably excludes non-canonical purines from DNA/RNA precursor pool, thus preventing their incorporation into DNA/RNA and avoiding chromosomal lesions. This Erwinia tasmaniensis (strain DSM 17950 / CFBP 7177 / CIP 109463 / NCPPB 4357 / Et1/99) protein is Inosine/xanthosine triphosphatase.